Reading from the N-terminus, the 332-residue chain is Glycerol-3-phosphate dehydrogenase [NAD(P)+] 2 (332 aa).

NADPH contacts are provided by S17, W18, R37, and K112. Sn-glycerol 3-phosphate-binding residues include K112 and G140. A144 provides a ligand contact to NADPH. Sn-glycerol 3-phosphate contacts are provided by K195, D243, S253, R254, and N255. K195 acts as the Proton acceptor in catalysis. Residue R254 coordinates NADPH. Positions 278 and 280 each coordinate NADPH.

It belongs to the NAD-dependent glycerol-3-phosphate dehydrogenase family.

It is found in the cytoplasm. The catalysed reaction is sn-glycerol 3-phosphate + NAD(+) = dihydroxyacetone phosphate + NADH + H(+). It carries out the reaction sn-glycerol 3-phosphate + NADP(+) = dihydroxyacetone phosphate + NADPH + H(+). It functions in the pathway membrane lipid metabolism; glycerophospholipid metabolism. In terms of biological role, catalyzes the reduction of the glycolytic intermediate dihydroxyacetone phosphate (DHAP) to sn-glycerol 3-phosphate (G3P), the key precursor for phospholipid synthesis. This is Glycerol-3-phosphate dehydrogenase [NAD(P)+] 2 from Mycolicibacterium paratuberculosis (strain ATCC BAA-968 / K-10) (Mycobacterium paratuberculosis).